The following is a 448-amino-acid chain: 26S proteasome regulatory subunit 4 homolog (448 aa).

Positions 1-10 (MGQAQSGNFS) are enriched in polar residues. A disordered region spans residues 1-58 (MGQAQSGNFSNFGDGANGDNKKDQKKDKPKYEPPVPTRTGRRKKKAQSGPDASAKLPT). The segment covering 19 to 31 (DNKKDQKKDKPKY) has biased composition (basic and acidic residues). An ATP-binding site is contributed by 232–239 (GAPGTGKT).

It belongs to the AAA ATPase family.

Its subcellular location is the cytoplasm. The protein resides in the nucleus. The 26S proteasome is involved in the ATP-dependent degradation of ubiquitinated proteins. The regulatory (or ATPase) complex confers ATP dependency and substrate specificity to the 26S complex. The sequence is that of 26S proteasome regulatory subunit 4 homolog (mts2) from Schizosaccharomyces pombe (strain 972 / ATCC 24843) (Fission yeast).